A 158-amino-acid polypeptide reads, in one-letter code: NAD(P)H-quinone oxidoreductase subunit N, organellar chromatophore (158 aa).

Belongs to the complex I NdhN subunit family. As to quaternary structure, NDH-1 can be composed of about 15 different subunits; different subcomplexes with different compositions have been identified which probably have different functions.

It is found in the plastid. The protein resides in the organellar chromatophore thylakoid membrane. It catalyses the reaction a plastoquinone + NADH + (n+1) H(+)(in) = a plastoquinol + NAD(+) + n H(+)(out). It carries out the reaction a plastoquinone + NADPH + (n+1) H(+)(in) = a plastoquinol + NADP(+) + n H(+)(out). In terms of biological role, NDH-1 shuttles electrons from an unknown electron donor, via FMN and iron-sulfur (Fe-S) centers, to quinones in the respiratory and/or the photosynthetic chain. The immediate electron acceptor for the enzyme in this species is believed to be plastoquinone. Couples the redox reaction to proton translocation, and thus conserves the redox energy in a proton gradient. This chain is NAD(P)H-quinone oxidoreductase subunit N, organellar chromatophore, found in Paulinella chromatophora.